A 729-amino-acid chain; its full sequence is Replication restart protein PriA (729 aa).

A Helicase ATP-binding domain is found at 209–376; that stretch reads QTALGRFRSF…QSGAYRLLQL (168 aa). 222 to 229 is an ATP binding site; sequence GITGSGKT. A DEAH box motif is present at residues 319 to 322; it reads DEEH. Zn(2+) contacts are provided by cysteine 436, cysteine 439, cysteine 445, cysteine 448, cysteine 463, cysteine 466, cysteine 476, and cysteine 479. One can recognise a Helicase C-terminal domain in the interval 471–623; it reads PIPFKCPDCG…YAVFAENELN (153 aa).

It belongs to the helicase family. PriA subfamily. As to quaternary structure, interacts with PriB with high affinity in the absence of DNA. Component of the replication restart primosome. Requires Zn(2+) as cofactor.

It carries out the reaction Couples ATP hydrolysis with the unwinding of duplex DNA by translocating in the 3'-5' direction.. It catalyses the reaction ATP + H2O = ADP + phosphate + H(+). With respect to regulation, helicase and ATPase activities on forked DNA are stimulated by PriB; E.coli PriB does not stimulate this helicase. PriA:PriB complex-catalyzed duplex DNA winding is inhibited by CGS 15943 (CHEBI:131351). CGS 15943 decreases ATP hydrolysis and decreases PriA's affinity for DNA. Initiates the restart of stalled replication forks, which reloads the replicative helicase on sites other than the origin of replication. Recognizes and binds to abandoned replication forks and remodels them to uncover a helicase loading site. Promotes assembly of the primosome at these replication forks. Functionally, DNA helicase with greatest unwinding activity on forked DNA substrates with relatively short duplex lagging strand arms. A DNA-dependent ATPase. Required for DNA transformation and DNA repair. Binds single-stranded (ss)DNA and replication fork-like DNA but not double-stranded (ds)DNA. In Neisseria gonorrhoeae (strain ATCC 700825 / FA 1090), this protein is Replication restart protein PriA.